The chain runs to 334 residues: Fructose-1,6-bisphosphatase class 1 (334 aa).

The Mg(2+) site is built by Glu90, Asp113, Leu115, and Asp116. Substrate-binding positions include 116-119, Asn209, Tyr242, and Lys272; that span reads DGSS. Glu278 is a Mg(2+) binding site.

Belongs to the FBPase class 1 family. As to quaternary structure, homotetramer. The cofactor is Mg(2+).

The protein localises to the cytoplasm. It carries out the reaction beta-D-fructose 1,6-bisphosphate + H2O = beta-D-fructose 6-phosphate + phosphate. It functions in the pathway carbohydrate biosynthesis; gluconeogenesis. This chain is Fructose-1,6-bisphosphatase class 1, found in Actinobacillus pleuropneumoniae serotype 5b (strain L20).